We begin with the raw amino-acid sequence, 602 residues long: UPF0329 protein ECU02_0060 (602 aa).

Positions 313 to 345 (EEDERKRAEAESARNREELLRMEEREKGKEKGS) are enriched in basic and acidic residues. The tract at residues 313–407 (EEDERKRAEA…SPKEESKGEE (95 aa)) is disordered. Residues 346-356 (KGKGRKKRGKK) show a composition bias toward basic residues. Residues 357–369 (GAGEAKEESKEED) show a composition bias toward basic and acidic residues. The segment covering 370-384 (RGGEEEESVEADVPV) has biased composition (acidic residues).

Belongs to the UPF0329 family.

The protein is UPF0329 protein ECU02_0060 of Encephalitozoon cuniculi (strain GB-M1) (Microsporidian parasite).